The primary structure comprises 1138 residues: Pesticidal crystal protein Cry7Ab (1138 aa).

The protein belongs to the delta endotoxin family.

Functionally, promotes colloidosmotic lysis by binding to the midgut epithelial cells of Coleoptera. This chain is Pesticidal crystal protein Cry7Ab (cry7Ab), found in Bacillus thuringiensis subsp. dakota.